The following is a 909-amino-acid chain: Valine--tRNA ligase (909 aa).

The short motif at 52 to 62 (PNVTGVLHVGH) is the 'HIGH' region element. Positions 542–546 (KMSKS) match the 'KMSKS' region motif. Position 545 (K545) interacts with ATP. A coiled-coil region spans residues 843 to 902 (IDIDQLKKRFEKELEKNEQNASKIDSKLKNENFVKNAPPEVIEGEKEKHAEFLRRIEKLK).

This sequence belongs to the class-I aminoacyl-tRNA synthetase family. ValS type 1 subfamily. In terms of assembly, monomer.

The protein localises to the cytoplasm. It carries out the reaction tRNA(Val) + L-valine + ATP = L-valyl-tRNA(Val) + AMP + diphosphate. In terms of biological role, catalyzes the attachment of valine to tRNA(Val). As ValRS can inadvertently accommodate and process structurally similar amino acids such as threonine, to avoid such errors, it has a 'posttransfer' editing activity that hydrolyzes mischarged Thr-tRNA(Val) in a tRNA-dependent manner. The chain is Valine--tRNA ligase from Treponema denticola (strain ATCC 35405 / DSM 14222 / CIP 103919 / JCM 8153 / KCTC 15104).